We begin with the raw amino-acid sequence, 416 residues long: Enterobactin exporter EntS (416 aa).

The Cytoplasmic portion of the chain corresponds to 1 to 21; sequence MNKQSWLLNLSLLKTHPAFRA. Residues 22–42 traverse the membrane as a helical segment; sequence VFLARFISIVSLGLLGVAVPV. Residues 43 to 55 lie on the Periplasmic side of the membrane; the sequence is QIQMMTHSTWQVG. Residues 56 to 76 traverse the membrane as a helical segment; sequence LSVTLTGGAMFVGLMVGGVLA. At 77–83 the chain is on the cytoplasmic side; the sequence is DRYERKK. Residues 84 to 104 form a helical membrane-spanning segment; the sequence is VILLARGTCGIGFIGLCLNAL. Residues 105–109 are Periplasmic-facing; that stretch reads LPEPS. A helical membrane pass occupies residues 110-130; that stretch reads LLAIYLLGLWDGFFASLGVTA. Residues 131 to 156 are Cytoplasmic-facing; the sequence is LLAATPALVGRENLMQAGAITMLTVR. The helical transmembrane segment at 157–177 threads the bilayer; sequence LGSVNSPMIGGLLLAIGGVAW. Residue asparagine 178 is a topological domain, periplasmic. The chain crosses the membrane as a helical span at residues 179-199; sequence YGLAAAGTFITLLPLLSLPAL. At 200–218 the chain is on the cytoplasmic side; that stretch reads PPPPQPREHPLKSLLAGFR. A helical membrane pass occupies residues 219–239; it reads FLLASPLVGGIALLGGLLTMA. At 240–256 the chain is on the periplasmic side; sequence SAVRVLYPALADNWQMS. The helical transmembrane segment at 257–277 threads the bilayer; it reads AAQIGFLYAAIPLGAAIGALT. Residues 278–287 lie on the Cytoplasmic side of the membrane; that stretch reads SGKLAHSARP. Residues 288-307 form a helical membrane-spanning segment; the sequence is GLLMLLSTLGSFLAIGLFGL. At 308-313 the chain is on the periplasmic side; the sequence is MPMWIL. The helical transmembrane segment at 314–336 threads the bilayer; the sequence is GVVCLALFGWLSAVSSLLQYTML. The Cytoplasmic segment spans residues 337–356; that stretch reads QTQTPEVMLGRINGLWTAQN. Residues 357–377 form a helical membrane-spanning segment; that stretch reads VTGDAIGAALLGGLGAMMTPV. Position 378 (alanine 378) is a topological domain, periplasmic. The helical transmembrane segment at 379 to 399 threads the bilayer; that stretch reads SASASGFGLLIIGVLLLLVLV. Residues 400-416 are Cytoplasmic-facing; sequence ELRHFRQTPPQVTASDS.

This sequence belongs to the major facilitator superfamily. EntS (TC 2.A.1.38) family.

The protein localises to the cell inner membrane. Functionally, component of an export pathway for enterobactin. This is Enterobactin exporter EntS from Shigella dysenteriae serotype 1 (strain Sd197).